We begin with the raw amino-acid sequence, 291 residues long: tRNA dimethylallyltransferase (291 aa).

9 to 16 is a binding site for ATP; it reads GTTASGKS. 11–16 contacts substrate; that stretch reads TASGKS. Residues 34-37 are interaction with substrate tRNA; the sequence is DSLA.

The protein belongs to the IPP transferase family. As to quaternary structure, monomer. Mg(2+) serves as cofactor.

The enzyme catalyses adenosine(37) in tRNA + dimethylallyl diphosphate = N(6)-dimethylallyladenosine(37) in tRNA + diphosphate. Functionally, catalyzes the transfer of a dimethylallyl group onto the adenine at position 37 in tRNAs that read codons beginning with uridine, leading to the formation of N6-(dimethylallyl)adenosine (i(6)A). The chain is tRNA dimethylallyltransferase from Campylobacter concisus (strain 13826).